We begin with the raw amino-acid sequence, 248 residues long: MTKVVLIRHGESVWNKENLFTGWADVTLSEKGIEEAKAGGAELKKAGFTFDKAYTSTLTRAIKTLNLVLEEMGLLWIPVDKCWQLNERHYGALQGLNKSQTAEKYGEDQVKIWRRSYDTPPPALEKSDERYPGHDPRYKNLSEKELPLTECLKDTVARVVPFWENVILPDIKAGKKIIIAAHGNSLRALVKYLDNISDADITELNIPTGMPLVYELDDNFKAVNKQYLGDPEAVKKAMEAVANQGKKK.

Residues 8-15 (RHGESVWN), 21-22 (TG), arginine 60, 87-90 (ERHY), lysine 98, 114-115 (RR), and 183-184 (GN) each bind substrate. Histidine 9 (tele-phosphohistidine intermediate) is an active-site residue. Glutamate 87 acts as the Proton donor/acceptor in catalysis.

It belongs to the phosphoglycerate mutase family. BPG-dependent PGAM subfamily.

The enzyme catalyses (2R)-2-phosphoglycerate = (2R)-3-phosphoglycerate. It functions in the pathway carbohydrate degradation; glycolysis; pyruvate from D-glyceraldehyde 3-phosphate: step 3/5. Its function is as follows. Catalyzes the interconversion of 2-phosphoglycerate and 3-phosphoglycerate. The protein is 2,3-bisphosphoglycerate-dependent phosphoglycerate mutase of Brachyspira hyodysenteriae (strain ATCC 49526 / WA1).